The chain runs to 481 residues: Argininosuccinate lyase (481 aa).

It belongs to the lyase 1 family. Argininosuccinate lyase subfamily.

It localises to the cytoplasm. It carries out the reaction 2-(N(omega)-L-arginino)succinate = fumarate + L-arginine. The protein operates within amino-acid biosynthesis; L-arginine biosynthesis; L-arginine from L-ornithine and carbamoyl phosphate: step 3/3. In Methanococcus maripaludis (strain DSM 14266 / JCM 13030 / NBRC 101832 / S2 / LL), this protein is Argininosuccinate lyase.